Reading from the N-terminus, the 238-residue chain is Ribosomal RNA small subunit methyltransferase G (238 aa).

S-adenosyl-L-methionine contacts are provided by residues Gly-77, Phe-82, 128 to 129 (AE), and Arg-147.

It belongs to the methyltransferase superfamily. RNA methyltransferase RsmG family.

Its subcellular location is the cytoplasm. Specifically methylates the N7 position of guanine in position 535 of 16S rRNA. This is Ribosomal RNA small subunit methyltransferase G from Listeria innocua serovar 6a (strain ATCC BAA-680 / CLIP 11262).